Reading from the N-terminus, the 264-residue chain is ECF RNA polymerase sigma factor BldN (264 aa).

The interval 1-87 is not required for transcription in vitro; the sequence is MYPHVGVDAS…PAADSDSARM (87 aa). Residues 64–83 form a disordered region; the sequence is RSSSSGAAATTHRRPAADSD. The tract at residues 105–172 is sigma-70 factor domain-2; the sequence is LYDQYSDTVY…LVADHFKSSR (68 aa). A Polymerase core binding motif is present at residues 129-132; it reads DLTS. Residues 204–255 form a sigma-70 factor domain-4 region; it reads ALLDAVRRLNPQQQECVTLRFLQGLSVAETARVMGKNEGAIKTLQYRAVRTL.

Belongs to the sigma-70 factor family. ECF subfamily. Post-translationally, two forms of protein exist; a 35 kDa form in early growth and a 28 kDa form seen in later stages (at protein level). In liquid culture the larger form accumulates to higher level than on solid media. The shorter form results from processing just upstream of Met-87; the exact position is unknown. There are 4 possible start codons; mutation of the first prevents protein production while mutation of the other 3 (Val-44, Met-87 and Met-88) permits production of both forms. Introduction of stop codons between the first and second, or second and third possible start codons also prevents protein production, corroborating that the annotated start codon is the correct one.

In terms of biological role, sigma factors are initiation factors that promote the attachment of RNA polymerase to specific initiation sites and are then released. Extracytoplasmic function (ECF) sigma factors are usually held in an inactive form by an anti-sigma factor until released. ECF sigma factor involved in aerial mycelium formation, required for translation from the bldMp1 promoter. Expressed as a preprotein; processing and accumulation of the mature protein starts as aerial mycelium formation and sporulation commence. Activates expression of about 17 genes, including those for rdlA and most of the chaplins (chpA to chpH); chaplin activation is indirect. This Streptomyces coelicolor (strain ATCC BAA-471 / A3(2) / M145) protein is ECF RNA polymerase sigma factor BldN.